The primary structure comprises 147 residues: uncharacterized protein (147 aa).

One can recognise an HTH LytTR-type domain in the interval 44-147 (LVGYIDKEIH…LKSIKERLSI (104 aa)).

It is found in the cytoplasm. This is an uncharacterized protein from Staphylococcus aureus (strain bovine RF122 / ET3-1).